Consider the following 1038-residue polypeptide: GTPase-activating Rap/Ran-GAP domain-like protein 3 (1038 aa).

A phosphoserine mark is found at Lys-6 and Ser-68. A Rap-GAP domain is found at 214–430 (LLVLEEQEGS…RTLDMLIRSL (217 aa)). Residues Ser-449 and Ser-455 each carry the phosphoserine modification. The CNH domain occupies 512–824 (PHEAVCADPW…QLVASRSDIY (313 aa)). Disordered stretches follow at residues 833 to 863 (EGSS…FPSS) and 937 to 1038 (LLGL…IDLK). Thr-851 is subject to Phosphothreonine. Positions 1019–1028 (SGSSPFQLMA) are enriched in polar residues.

Belongs to the GARNL3 family.

This is GTPase-activating Rap/Ran-GAP domain-like protein 3 (Garnl3) from Mus musculus (Mouse).